Reading from the N-terminus, the 116-residue chain is Endocuticle structural glycoprotein ABD-4 (116 aa).

Gln-1 carries the pyrrolidone carboxylic acid modification. In terms of domain architecture, Chitin-binding type R&amp;R spans 20–92 (DGSYQWNYET…PQGAHFPTPP (73 aa)). A disordered region spans residues 78 to 97 (ENGFVPQGAHFPTPPPIPPA). Thr-90 carries an O-linked (GalNAc) threonine; in ADB-4A, ABD-4B and ABD-4C glycan. Thr-107 carries O-linked (GalNAc) threonine; in ADB-4A and ABD-4B glycosylation. O-linked (GalNAc) threonine; in ADB-4A glycosylation occurs at Thr-111. Position 116 is a proline amide (Pro-116).

Post-translationally, 3 variants exists that arise from a sequential glycosylation with N-acetylgalactosamine at three (ABD-4A), two (ABD-4B) or one (ABD-4C) threonine residues.

Its function is as follows. Component of the soft endocuticle of migratory locust. This Locusta migratoria (Migratory locust) protein is Endocuticle structural glycoprotein ABD-4.